We begin with the raw amino-acid sequence, 347 residues long: Protein RecA (347 aa).

67-74 (GPESSGKT) contacts ATP.

Belongs to the RecA family.

The protein resides in the cytoplasm. Functionally, can catalyze the hydrolysis of ATP in the presence of single-stranded DNA, the ATP-dependent uptake of single-stranded DNA by duplex DNA, and the ATP-dependent hybridization of homologous single-stranded DNAs. It interacts with LexA causing its activation and leading to its autocatalytic cleavage. The protein is Protein RecA of Helicobacter pylori (strain HPAG1).